Here is a 102-residue protein sequence, read N- to C-terminus: uncharacterized protein (102 aa).

In terms of domain architecture, HTH cro/C1-type spans 48–102 (LNDKRKSLGIELSMLELQTGVSISTLNRLFQDPSQVRFTTVFLVAQTLGVSLCAI). The segment at residues 59–78 (LSMLELQTGVSISTLNRLFQ) is a DNA-binding region (H-T-H motif).

This is an uncharacterized protein from Haemophilus influenzae (strain ATCC 51907 / DSM 11121 / KW20 / Rd).